A 401-amino-acid chain; its full sequence is Imidazolonepropionase (401 aa).

His66 and His68 together coordinate Fe(3+). His66 and His68 together coordinate Zn(2+). 4-imidazolone-5-propanoate is bound by residues Arg75, Tyr138, and His171. Tyr138 contributes to the N-formimidoyl-L-glutamate binding site. His236 is a binding site for Fe(3+). Position 236 (His236) interacts with Zn(2+). Gln239 is a 4-imidazolone-5-propanoate binding site. Asp311 provides a ligand contact to Fe(3+). Residue Asp311 participates in Zn(2+) binding. Asn313 and Gly315 together coordinate N-formimidoyl-L-glutamate. Thr316 is a binding site for 4-imidazolone-5-propanoate.

It belongs to the metallo-dependent hydrolases superfamily. HutI family. Requires Zn(2+) as cofactor. Fe(3+) is required as a cofactor.

Its subcellular location is the cytoplasm. The enzyme catalyses 4-imidazolone-5-propanoate + H2O = N-formimidoyl-L-glutamate. It functions in the pathway amino-acid degradation; L-histidine degradation into L-glutamate; N-formimidoyl-L-glutamate from L-histidine: step 3/3. In terms of biological role, catalyzes the hydrolytic cleavage of the carbon-nitrogen bond in imidazolone-5-propanoate to yield N-formimidoyl-L-glutamate. It is the third step in the universal histidine degradation pathway. The chain is Imidazolonepropionase from Pseudomonas putida (strain ATCC 700007 / DSM 6899 / JCM 31910 / BCRC 17059 / LMG 24140 / F1).